A 233-amino-acid chain; its full sequence is Aquaglyceroporin AqpS (233 aa).

Transmembrane regions (helical) follow at residues 11-31 (VAEA…GIMA) and 40-60 (LALV…VTIL). The short motif at 69–71 (NPA) is the NPA 1 element. Helical transmembrane passes span 89 to 109 (AYVI…HLMF), 125 to 145 (AQWL…LAGI), and 152 to 172 (VPWL…STSF). Positions 174-176 (NPA) match the NPA 2 motif. A helical membrane pass occupies residues 193 to 213 (GDLPGFVIAELLGAVCALALM).

Belongs to the MIP/aquaporin (TC 1.A.8) family. NIP (TC 1.A.8.12) subfamily.

The protein localises to the cell inner membrane. Involved in resistance to arsenic. Facilitates efflux of arsenite [As(III)]. Arsenate [As(V)] enters the cell through phosphate transport systems and is reduced to arsenite by the arsenate reductase ArsC. Internally generated arsenite flows out of the cell by downhill movement through AqpS. Can also transport the highly toxic methylarsenite [MAs(III)] and the relatively non-toxic methylarsenate [MAs(V)]. May be a component of an methylarsenite resistance pathway in which methylarsenite enters cells via AqpS, is oxidized by ArsH to methylarsenate, which exits the cells via AqpS. This pathway may confer a selective advantage for R.melliloti to grow in the presence of environmental methylarsenicals. The chain is Aquaglyceroporin AqpS from Rhizobium meliloti (strain 1021) (Ensifer meliloti).